A 192-amino-acid polypeptide reads, in one-letter code: Peptidyl-tRNA hydrolase (192 aa).

A tRNA-binding site is contributed by Tyr17. The Proton acceptor role is filled by His22. Positions 68, 70, and 116 each coordinate tRNA.

This sequence belongs to the PTH family. As to quaternary structure, monomer.

It is found in the cytoplasm. The enzyme catalyses an N-acyl-L-alpha-aminoacyl-tRNA + H2O = an N-acyl-L-amino acid + a tRNA + H(+). Hydrolyzes ribosome-free peptidyl-tRNAs (with 1 or more amino acids incorporated), which drop off the ribosome during protein synthesis, or as a result of ribosome stalling. Functionally, catalyzes the release of premature peptidyl moieties from peptidyl-tRNA molecules trapped in stalled 50S ribosomal subunits, and thus maintains levels of free tRNAs and 50S ribosomes. In Mycobacterium sp. (strain JLS), this protein is Peptidyl-tRNA hydrolase.